We begin with the raw amino-acid sequence, 275 residues long: MTSAGVFNAGSDERANSRDEEYPCSSEVSPSTESSCSNFINIKVGLLEQFLLYKFKMKQRILKEDMLKIVNPRYQNQFAEIHRRASEHIEVVFAVDLKEVNPTCHLYDLVSKLKLPNNGRIHVGKVLPKTGLLMTFLVVIFLKGNCANKEDTWKFLDMMQIYDGKKYYIYGEPRKLITQDFVRLTYLEYHQVPCSYPAHYQFLWGPRAYTETSKMKVLEYLAKVNDIAPGAFSSQYEEALQDEEESPSQRCSRNWHYCSGQDCLRAKFSSFSQPY.

Positions 1–33 are disordered; the sequence is MTSAGVFNAGSDERANSRDEEYPCSSEVSPSTE. A compositionally biased stretch (basic and acidic residues) spans 11–21; that stretch reads SDERANSRDEE. The segment covering 23–33 has biased composition (low complexity); it reads PCSSEVSPSTE. Positions 40 to 239 constitute an MAGE domain; the sequence is INIKVGLLEQ…GAFSSQYEEA (200 aa).

In terms of tissue distribution, expressed in testis. Not expressed in other normal tissues, but is expressed in tumors of different histological origins.

The polypeptide is Melanoma-associated antigen B5 (MAGEB5) (Homo sapiens (Human)).